The following is a 145-amino-acid chain: Transcriptional regulator MraZ (145 aa).

SpoVT-AbrB domains follow at residues Asn-7–Leu-54 and Gly-83–Ala-126.

The protein belongs to the MraZ family. In terms of assembly, forms oligomers.

The protein resides in the cytoplasm. It localises to the nucleoid. This Rhizobium leguminosarum bv. trifolii (strain WSM2304) protein is Transcriptional regulator MraZ.